Reading from the N-terminus, the 223-residue chain is 2-C-methyl-D-erythritol 4-phosphate cytidylyltransferase (223 aa).

The protein belongs to the IspD/TarI cytidylyltransferase family. IspD subfamily.

It catalyses the reaction 2-C-methyl-D-erythritol 4-phosphate + CTP + H(+) = 4-CDP-2-C-methyl-D-erythritol + diphosphate. It functions in the pathway isoprenoid biosynthesis; isopentenyl diphosphate biosynthesis via DXP pathway; isopentenyl diphosphate from 1-deoxy-D-xylulose 5-phosphate: step 2/6. Its function is as follows. Catalyzes the formation of 4-diphosphocytidyl-2-C-methyl-D-erythritol from CTP and 2-C-methyl-D-erythritol 4-phosphate (MEP). The sequence is that of 2-C-methyl-D-erythritol 4-phosphate cytidylyltransferase from Prochlorococcus marinus (strain AS9601).